Reading from the N-terminus, the 34-residue chain is Photosystem II reaction center protein M (34 aa).

A helical membrane pass occupies residues 5–25 (ILAFIATALFILIPTAFLLIL).

This sequence belongs to the PsbM family. In terms of assembly, PSII is composed of 1 copy each of membrane proteins PsbA, PsbB, PsbC, PsbD, PsbE, PsbF, PsbH, PsbI, PsbJ, PsbK, PsbL, PsbM, PsbT, PsbX, PsbY, PsbZ, Psb30/Ycf12, at least 3 peripheral proteins of the oxygen-evolving complex and a large number of cofactors. It forms dimeric complexes.

The protein localises to the plastid. Its subcellular location is the chloroplast thylakoid membrane. In terms of biological role, one of the components of the core complex of photosystem II (PSII). PSII is a light-driven water:plastoquinone oxidoreductase that uses light energy to abstract electrons from H(2)O, generating O(2) and a proton gradient subsequently used for ATP formation. It consists of a core antenna complex that captures photons, and an electron transfer chain that converts photonic excitation into a charge separation. This subunit is found at the monomer-monomer interface. This chain is Photosystem II reaction center protein M, found in Angiopteris evecta (Mule's foot fern).